A 287-amino-acid chain; its full sequence is uncharacterized protein (287 aa).

A disordered region spans residues 1-23 (MTVSDSPAQRQTPPQTPGGTAPR). A compositionally biased stretch (low complexity) spans 7 to 23 (PAQRQTPPQTPGGTAPR). Mg(2+) contacts are provided by aspartate 31, aspartate 33, and aspartate 204.

The protein belongs to the HAD-like hydrolase superfamily. SerB family.

This is an uncharacterized protein from Mycobacterium tuberculosis (strain CDC 1551 / Oshkosh).